We begin with the raw amino-acid sequence, 90 residues long: Major envelope protein (90 aa).

A helical transmembrane segment spans residues 53–70; it reads AVSVVSWAVAAGLIGELI.

It localises to the virion membrane. Essential for membrane formation. The protein is Major envelope protein (P9) of Pseudomonas savastanoi pv. phaseolicola (Pseudomonas syringae pv. phaseolicola).